The following is a 276-amino-acid chain: Release factor glutamine methyltransferase (276 aa).

S-adenosyl-L-methionine-binding positions include 117 to 121, Asp-140, Trp-168, and Asn-182; that span reads GTGTG. Position 182–185 (182–185) interacts with substrate; the sequence is NPPY.

This sequence belongs to the protein N5-glutamine methyltransferase family. PrmC subfamily.

It carries out the reaction L-glutaminyl-[peptide chain release factor] + S-adenosyl-L-methionine = N(5)-methyl-L-glutaminyl-[peptide chain release factor] + S-adenosyl-L-homocysteine + H(+). Its function is as follows. Methylates the class 1 translation termination release factors RF1/PrfA and RF2/PrfB on the glutamine residue of the universally conserved GGQ motif. The sequence is that of Release factor glutamine methyltransferase from Yersinia pestis.